Here is a 227-residue protein sequence, read N- to C-terminus: PKHD-type hydroxylase CC_0027 (227 aa).

In terms of domain architecture, Fe2OG dioxygenase spans 78–178; sequence TILSPMFNRY…RTASFFWIQS (101 aa). The Fe cation site is built by His-96, Asp-98, and His-159. A 2-oxoglutarate-binding site is contributed by Arg-169.

Fe(2+) serves as cofactor. L-ascorbate is required as a cofactor.

This Caulobacter vibrioides (strain ATCC 19089 / CIP 103742 / CB 15) (Caulobacter crescentus) protein is PKHD-type hydroxylase CC_0027.